The chain runs to 493 residues: Cytochrome P450 2E1 (493 aa).

298–303 (FAGTET) lines the substrate pocket. Cys-437 lines the heme pocket.

It belongs to the cytochrome P450 family. In terms of assembly, interacts with chaperones HSP70 and HSP90; this interaction is required for initial targeting to mitochondria. It depends on heme as a cofactor.

The protein localises to the endoplasmic reticulum membrane. Its subcellular location is the microsome membrane. It is found in the mitochondrion inner membrane. The enzyme catalyses an organic molecule + reduced [NADPH--hemoprotein reductase] + O2 = an alcohol + oxidized [NADPH--hemoprotein reductase] + H2O + H(+). The catalysed reaction is (5Z,8Z,11Z)-eicosatrienoate + reduced [NADPH--hemoprotein reductase] + O2 = 19-hydroxy-(5Z,8Z,11Z)-eicosatrienoate + oxidized [NADPH--hemoprotein reductase] + H2O + H(+). It catalyses the reaction (5Z,8Z,11Z,14Z,17Z)-eicosapentaenoate + reduced [NADPH--hemoprotein reductase] + O2 = 19-hydroxy-(5Z,8Z,11Z,14Z,17Z)-eicosapentaenoate + oxidized [NADPH--hemoprotein reductase] + H2O + H(+). It carries out the reaction (4Z,7Z,10Z,13Z,16Z,19Z)-docosahexaenoate + reduced [NADPH--hemoprotein reductase] + O2 = 21-hydroxy-(4Z,7Z,10Z,13Z,16Z,19Z)-docosahexaenoate + oxidized [NADPH--hemoprotein reductase] + H2O + H(+). The enzyme catalyses dodecanoate + reduced [NADPH--hemoprotein reductase] + O2 = 11-hydroxydodecanoate + oxidized [NADPH--hemoprotein reductase] + H2O + H(+). The catalysed reaction is tetradecanoate + reduced [NADPH--hemoprotein reductase] + O2 = 13-hydroxytetradecanoate + oxidized [NADPH--hemoprotein reductase] + H2O + H(+). It catalyses the reaction 4-nitrophenol + NADPH + O2 + H(+) = 4-nitrocatechol + NADP(+) + H2O. It functions in the pathway lipid metabolism; fatty acid metabolism. With respect to regulation, the omega-1 hydroxylase activity is stimulated by cytochrome b5. Functionally, a cytochrome P450 monooxygenase involved in the metabolism of fatty acids. Mechanistically, uses molecular oxygen inserting one oxygen atom into a substrate, and reducing the second into a water molecule, with two electrons provided by NADPH via cytochrome P450 reductase (NADPH--hemoprotein reductase). Catalyzes the hydroxylation of carbon-hydrogen bonds. Hydroxylates fatty acids specifically at the omega-1 position displaying the highest catalytic activity for saturated fatty acids. May be involved in the oxidative metabolism of xenobiotics. In Mesocricetus auratus (Golden hamster), this protein is Cytochrome P450 2E1 (CYP2E1).